Here is a 252-residue protein sequence, read N- to C-terminus: Ureidoacrylate amidohydrolase RutB (252 aa).

Residues 1–14 are compositionally biased toward polar residues; it reads MSTPARNTTLTSNT. A disordered region spans residues 1 to 31; sequence MSTPARNTTLTSNTPAGAPRLPGAPAPQVLP. Over residues 15–27 the composition is skewed to low complexity; sequence PAGAPRLPGAPAP. Catalysis depends on Asp-50, which acts as the Proton acceptor. Lys-159 is a catalytic residue. The Nucleophile role is filled by Cys-192.

Belongs to the isochorismatase family. RutB subfamily.

It carries out the reaction (Z)-3-ureidoacrylate + H2O + H(+) = (Z)-3-aminoacrylate + NH4(+) + CO2. It catalyses the reaction (Z)-3-ureidoacrylate + H2O = (Z)-3-aminoacrylate + carbamate + H(+). The enzyme catalyses (Z)-2-methylureidoacrylate + H2O + H(+) = (Z)-2-methylaminoacrylate + NH4(+) + CO2. Its function is as follows. Hydrolyzes ureidoacrylate to form aminoacrylate and carbamate. The carbamate hydrolyzes spontaneously, thereby releasing one of the nitrogen atoms of the pyrimidine ring as ammonia and one of its carbon atoms as CO2. The sequence is that of Ureidoacrylate amidohydrolase RutB from Variovorax paradoxus (strain S110).